We begin with the raw amino-acid sequence, 205 residues long: Small ribosomal subunit protein uS4 (205 aa).

Basic and acidic residues predominate over residues 1 to 16 (MSKRESSKYKIDRRMG). The interval 1–46 (MSKRESSKYKIDRRMGENIWGRPKSPVNRREYGPGQHGQRRKGKLS) is disordered. Positions 94-157 (SRLDAIVYRA…KQLVTVLEAV (64 aa)) constitute an S4 RNA-binding domain.

It belongs to the universal ribosomal protein uS4 family. In terms of assembly, part of the 30S ribosomal subunit. Contacts protein S5. The interaction surface between S4 and S5 is involved in control of translational fidelity.

Functionally, one of the primary rRNA binding proteins, it binds directly to 16S rRNA where it nucleates assembly of the body of the 30S subunit. In terms of biological role, with S5 and S12 plays an important role in translational accuracy. The chain is Small ribosomal subunit protein uS4 from Rhizobium etli (strain CIAT 652).